The primary structure comprises 91 residues: Movement protein TGBp3 (91 aa).

The Lumenal portion of the chain corresponds to 1–23 (MLGTRNIPTTSGLPLPPPSSSLS). A helical transmembrane segment spans residues 24–46 (AYIFPTILAIIFAVFALVAIHIT). Residues 47–91 (TPEPFCTIHIDGASITITNCPDPAAILNKVAIGPWRGLSYHNNLK) lie on the Cytoplasmic side of the membrane.

The protein belongs to the Tymovirales TGBp3 protein family.

Its subcellular location is the host endoplasmic reticulum membrane. Its function is as follows. Plays a role in viral cell-to-cell propagation, by facilitating genome transport to neighboring plant cells through plasmosdesmata. May induce the formation of granular vesicles derived from the Endoplasmic reticulum, which align on actin filaments. This Cymbidium mosaic virus (strain Singapore) protein is Movement protein TGBp3.